We begin with the raw amino-acid sequence, 173 residues long: MTYFVFFLSLCFVLGGLAVASNPSPYYGVVGLVLASVAGCGWLLSLGVSFVSLVLFMVYLGGMLVVFVYSVALAADPFPEAWGDWRVVGYGVGFVGVLVMGLVVGGFIGCLNFGVITVDSTGMLSVRLDFSGVAMFYSRGVGMFLVAGWGLLLTLFVVLELVRGLSRGAIRAV.

Helical transmembrane passes span 1–21 (MTYF…AVAS), 27–47 (YGVV…LSLG), 48–68 (VSFV…VVFV), 91–111 (GVGF…IGCL), and 141–161 (VGMF…VLEL).

This sequence belongs to the complex I subunit 6 family.

It localises to the mitochondrion membrane. The enzyme catalyses a ubiquinone + NADH + 5 H(+)(in) = a ubiquinol + NAD(+) + 4 H(+)(out). Core subunit of the mitochondrial membrane respiratory chain NADH dehydrogenase (Complex I) that is believed to belong to the minimal assembly required for catalysis. Complex I functions in the transfer of electrons from NADH to the respiratory chain. The immediate electron acceptor for the enzyme is believed to be ubiquinone. The polypeptide is NADH-ubiquinone oxidoreductase chain 6 (MT-ND6) (Fratercula arctica (Atlantic puffin)).